The following is an 829-amino-acid chain: Periplasmic nitrate reductase (829 aa).

A signal peptide (tat-type signal) is located at residues 1–27; sequence MNRRDFMKANAVIAAASAAGLALPAGA. Residues 39-95 form the 4Fe-4S Mo/W bis-MGD-type domain; that stretch reads LEWNKAPCRFCGTGCSVMVATREGKVVATHGDANSEVNRGLSCIKGYFLSKIMYGRD. Cysteine 46, cysteine 49, cysteine 53, and cysteine 81 together coordinate [4Fe-4S] cluster. Residues lysine 83, glutamine 150, asparagine 175, cysteine 179, 212–219, 243–247, 262–264, methionine 373, glutamine 377, asparagine 483, 509–510, lysine 532, aspartate 559, and 719–728 contribute to the Mo-bis(molybdopterin guanine dinucleotide) site; these read WGSNMAEM, STFEH, QTD, SD, and TGRVLEHWHS. Tryptophan 795 is a binding site for substrate. Residues asparagine 803 and lysine 820 each contribute to the Mo-bis(molybdopterin guanine dinucleotide) site.

The protein belongs to the prokaryotic molybdopterin-containing oxidoreductase family. NasA/NapA/NarB subfamily. As to quaternary structure, component of the periplasmic nitrate reductase NapAB complex composed of NapA and NapB. [4Fe-4S] cluster serves as cofactor. It depends on Mo-bis(molybdopterin guanine dinucleotide) as a cofactor. In terms of processing, predicted to be exported by the Tat system. The position of the signal peptide cleavage has not been experimentally proven.

The protein resides in the periplasm. It catalyses the reaction 2 Fe(II)-[cytochrome] + nitrate + 2 H(+) = 2 Fe(III)-[cytochrome] + nitrite + H2O. Catalytic subunit of the periplasmic nitrate reductase complex NapAB. Receives electrons from NapB and catalyzes the reduction of nitrate to nitrite. The polypeptide is Periplasmic nitrate reductase (Shewanella denitrificans (strain OS217 / ATCC BAA-1090 / DSM 15013)).